The following is a 315-amino-acid chain: Methionyl-tRNA formyltransferase (315 aa).

113 to 116 lines the (6S)-5,6,7,8-tetrahydrofolate pocket; that stretch reads SLLP.

This sequence belongs to the Fmt family.

The catalysed reaction is L-methionyl-tRNA(fMet) + (6R)-10-formyltetrahydrofolate = N-formyl-L-methionyl-tRNA(fMet) + (6S)-5,6,7,8-tetrahydrofolate + H(+). Its function is as follows. Attaches a formyl group to the free amino group of methionyl-tRNA(fMet). The formyl group appears to play a dual role in the initiator identity of N-formylmethionyl-tRNA by promoting its recognition by IF2 and preventing the misappropriation of this tRNA by the elongation apparatus. This is Methionyl-tRNA formyltransferase from Escherichia coli O45:K1 (strain S88 / ExPEC).